The chain runs to 284 residues: MTAVTAAQRSVPAPFLSKTYQLVDDHSTDDVVSWNEEGTAFVVWKTAEFAKDLLPQYFKHNNFSSFIRQLNTYGFRKTVPDKWEFANDYFRRGGEDLLTDIRRRKSVIASTAGKCVVVGSPSESNSGGGDDHGSSSTSSPGSSKNPGSVENMVADLSGENEKLKRENNNLSSELAAAKKQRDELVTFLTGHLKVRPEQIDKMIKGGKFKPVESDEESECEGCDGGGGAEEGVGEGLKLFGVWLKGERKKRDRDEKNYVVSGSRMTEIKNVDFHAPLWKSSKVCN.

The DNA-binding element occupies 12-106 (PAPFLSKTYQ…LLTDIRRRKS (95 aa)). A disordered region spans residues 118–151 (VGSPSESNSGGGDDHGSSSTSSPGSSKNPGSVEN). Residues 134 to 148 (SSSTSSPGSSKNPGS) are compositionally biased toward low complexity. The segment at 147–192 (GSVENMVADLSGENEKLKRENNNLSSELAAAKKQRDELVTFLTGHL) is hydrophobic repeat HR-A/B. The short motif at 247 to 252 (RKKRDR) is the Nuclear localization signal element.

It belongs to the HSF family. Class B subfamily. Homotrimer. In terms of processing, exhibits temperature-dependent phosphorylation.

It is found in the nucleus. Transcriptional regulator that specifically binds DNA sequence 5'-AGAAnnTTCT-3' known as heat shock promoter elements (HSE). This is Heat stress transcription factor B-1 (HSFB1) from Arabidopsis thaliana (Mouse-ear cress).